The primary structure comprises 318 residues: NADH-ubiquinone oxidoreductase chain 1 (318 aa).

A run of 8 helical transmembrane segments spans residues 2–22 (FMINVLLLIVPILLAVAFLTL), 70–90 (MFIIAPILALTLALTMWIPLP), 100–120 (LGILFMLAMSSLAVYSILWSG), 147–167 (AIILLSVLLMSGSFTLSTLII), 171–191 (YLWLIFPSWPLAMMWFISTLA), 217–237 (AGPFALFFLAEYANIIMMNIF), 253–273 (ELYSINFTIKALLLTCSFLWI), and 294–314 (LPLTLALCMWHVSLPIMLSSI).

It belongs to the complex I subunit 1 family. In terms of assembly, core subunit of respiratory chain NADH dehydrogenase (Complex I) which is composed of 45 different subunits.

Its subcellular location is the mitochondrion inner membrane. The catalysed reaction is a ubiquinone + NADH + 5 H(+)(in) = a ubiquinol + NAD(+) + 4 H(+)(out). In terms of biological role, core subunit of the mitochondrial membrane respiratory chain NADH dehydrogenase (Complex I) which catalyzes electron transfer from NADH through the respiratory chain, using ubiquinone as an electron acceptor. Essential for the catalytic activity and assembly of complex I. The polypeptide is NADH-ubiquinone oxidoreductase chain 1 (MT-ND1) (Equus caballus (Horse)).